A 208-amino-acid chain; its full sequence is Probable GTP-binding protein EngB (208 aa).

Residues 23–205 (LTSEMVVLGR…RQTLLKHLLT (183 aa)) form the EngB-type G domain. Residues 31–38 (GRSNVGKS), 57–61 (GKTRL), 84–87 (DLPG), 154–157 (TKFD), and 182–184 (FNA) contribute to the GTP site. Residues S38 and T59 each contribute to the Mg(2+) site.

Belongs to the TRAFAC class TrmE-Era-EngA-EngB-Septin-like GTPase superfamily. EngB GTPase family. Requires Mg(2+) as cofactor.

Necessary for normal cell division and for the maintenance of normal septation. This chain is Probable GTP-binding protein EngB, found in Helicobacter pylori (strain ATCC 700392 / 26695) (Campylobacter pylori).